The primary structure comprises 331 residues: Phosphoribosylformylglycinamidine cyclo-ligase (331 aa).

The protein belongs to the AIR synthase family.

The protein localises to the cytoplasm. It catalyses the reaction 2-formamido-N(1)-(5-O-phospho-beta-D-ribosyl)acetamidine + ATP = 5-amino-1-(5-phospho-beta-D-ribosyl)imidazole + ADP + phosphate + H(+). It functions in the pathway purine metabolism; IMP biosynthesis via de novo pathway; 5-amino-1-(5-phospho-D-ribosyl)imidazole from N(2)-formyl-N(1)-(5-phospho-D-ribosyl)glycinamide: step 2/2. The chain is Phosphoribosylformylglycinamidine cyclo-ligase from Clostridium botulinum (strain ATCC 19397 / Type A).